Consider the following 860-residue polypeptide: DNA mismatch repair protein MutS (860 aa).

Residue 607–614 (GPNMSGKS) coordinates ATP.

Belongs to the DNA mismatch repair MutS family.

Its function is as follows. This protein is involved in the repair of mismatches in DNA. It is possible that it carries out the mismatch recognition step. This protein has a weak ATPase activity. In Listeria monocytogenes serotype 4b (strain CLIP80459), this protein is DNA mismatch repair protein MutS.